The following is a 489-amino-acid chain: L-asparagine permease 1 (489 aa).

A run of 12 helical transmembrane segments spans residues 25 to 45, 49 to 69, 100 to 120, 137 to 157, 162 to 182, 210 to 230, 255 to 275, 289 to 309, 344 to 364, 369 to 389, 413 to 433, and 439 to 459; these read QLQMIGIGGAIGTGLFLGAGG, KAGPGLFLVYGVCGVFVFLIL, AVGWMYFLHWAMTSIVDTTAI, ILALIALTVVLSMNLISVEWF, FWAALIKVLALMAFLVVGTVF, WLPLLIVTSGVVFAYSAVELV, IAIFYVGSVALLALLLPYTAY, IGFHGAGDLMNIVVLTAALSS, YGGIVLTAVITLFGVALNAFK, FEIVLNMSALGIIAGWATIVL, SPYSGYLTLLFLLVVLVTMAS, and TWTVATLIIVIPALTAGWYLV.

It belongs to the amino acid-polyamine-organocation (APC) superfamily. Amino acid transporter (AAT) (TC 2.A.3.1) family.

The protein resides in the cell membrane. This Mycobacterium tuberculosis (strain CDC 1551 / Oshkosh) protein is L-asparagine permease 1 (ansP1).